We begin with the raw amino-acid sequence, 129 residues long: Small ribosomal subunit protein uS9 (129 aa).

The protein belongs to the universal ribosomal protein uS9 family.

The protein is Small ribosomal subunit protein uS9 of Pelodictyon phaeoclathratiforme (strain DSM 5477 / BU-1).